The primary structure comprises 445 residues: Tubulin beta-1 chain (445 aa).

The MREI motif signature appears at 1 to 4; the sequence is MREI. GTP contacts are provided by Q11, E69, S138, G142, T143, G144, N204, and N226. E69 contacts Mg(2+). Positions 425 to 445 are disordered; it reads YQDATAEEEGEFEEEGEEELA. Over residues 429 to 445 the composition is skewed to acidic residues; it reads TAEEEGEFEEEGEEELA. A 5-glutamyl polyglutamate modification is found at E438.

Belongs to the tubulin family. In terms of assembly, dimer of alpha and beta chains. A typical microtubule is a hollow water-filled tube with an outer diameter of 25 nm and an inner diameter of 15 nM. Alpha-beta heterodimers associate head-to-tail to form protofilaments running lengthwise along the microtubule wall with the beta-tubulin subunit facing the microtubule plus end conferring a structural polarity. Microtubules usually have 13 protofilaments but different protofilament numbers can be found in some organisms and specialized cells. Requires Mg(2+) as cofactor. Post-translationally, some glutamate residues at the C-terminus are polyglycylated, resulting in polyglycine chains on the gamma-carboxyl group. Glycylation is mainly limited to tubulin incorporated into axonemes (cilia and flagella) whereas glutamylation is prevalent in neuronal cells, centrioles, axonemes, and the mitotic spindle. Both modifications can coexist on the same protein on adjacent residues, and lowering polyglycylation levels increases polyglutamylation, and reciprocally. The precise function of polyglycylation is still unclear. Some glutamate residues at the C-terminus are polyglutamylated, resulting in polyglutamate chains on the gamma-carboxyl group. Polyglutamylation plays a key role in microtubule severing by spastin (SPAST). SPAST preferentially recognizes and acts on microtubules decorated with short polyglutamate tails: severing activity by SPAST increases as the number of glutamates per tubulin rises from one to eight, but decreases beyond this glutamylation threshold.

Its subcellular location is the cytoplasm. It is found in the cytoskeleton. Its function is as follows. Tubulin is the major constituent of microtubules, a cylinder consisting of laterally associated linear protofilaments composed of alpha- and beta-tubulin heterodimers. Microtubules grow by the addition of GTP-tubulin dimers to the microtubule end, where a stabilizing cap forms. Below the cap, tubulin dimers are in GDP-bound state, owing to GTPase activity of alpha-tubulin. This Gadus morhua (Atlantic cod) protein is Tubulin beta-1 chain.